Consider the following 119-residue polypeptide: Fluoride-specific ion channel FluC 2 (119 aa).

2 consecutive transmembrane segments (helical) span residues 1 to 21 (MIFA…ALTS) and 44 to 64 (GAFF…YAFL). Residues G70 and T73 each coordinate Na(+). Residues 98–118 (LLASYLGGAVLLTCGYYLGSL) form a helical membrane-spanning segment.

This sequence belongs to the fluoride channel Fluc/FEX (TC 1.A.43) family.

The protein resides in the cell membrane. It carries out the reaction fluoride(in) = fluoride(out). With respect to regulation, na(+) is not transported, but it plays an essential structural role and its presence is essential for fluoride channel function. In terms of biological role, fluoride-specific ion channel. Important for reducing fluoride concentration in the cell, thus reducing its toxicity. The polypeptide is Fluoride-specific ion channel FluC 2 (Lactobacillus delbrueckii subsp. bulgaricus (strain ATCC 11842 / DSM 20081 / BCRC 10696 / JCM 1002 / NBRC 13953 / NCIMB 11778 / NCTC 12712 / WDCM 00102 / Lb 14)).